The sequence spans 150 residues: FCS-Like Zinc finger 15 (150 aa).

Low complexity predominate over residues 12-28; it reads NNNNNNNNNNNNNNNKN. The interval 12-31 is disordered; it reads NNNNNNNNNNNNNNNKNPLS. The FLZ-type zinc finger occupies 67–111; the sequence is GFLEHCFLCRRKLLPAKDIYMYKGDRAFCSVECRSKQMIMDEEES. Residues 129–150 are disordered; it reads SPATAPSRYRRDPRNQAGGFAY.

This sequence belongs to the FLZ family. In terms of assembly, interacts with KIN10 and KIN11 via its FLZ-type zinc finger domain. Interacts with KINB1 and KINB3 via its N-terminal part. Forms homodimer and heterodimer with FLZ1, FLZ2 and FLZ7 in vitro.

Its subcellular location is the cytoplasm. It localises to the P-body. In terms of biological role, may act as an adapter to facilitate the interaction of SnRK1 complex with effector proteins, conferring tissue- and stimulus-type specific differences in the SnRK1 regulation pathway. The sequence is that of FCS-Like Zinc finger 15 from Arabidopsis thaliana (Mouse-ear cress).